A 210-amino-acid polypeptide reads, in one-letter code: Large ribosomal subunit protein uL3 (210 aa).

A disordered region spans residues 126–150 (VSATHGSHRNHRKPGSVGASSTPSR).

This sequence belongs to the universal ribosomal protein uL3 family. As to quaternary structure, part of the 50S ribosomal subunit. Forms a cluster with proteins L14 and L19.

One of the primary rRNA binding proteins, it binds directly near the 3'-end of the 23S rRNA, where it nucleates assembly of the 50S subunit. The polypeptide is Large ribosomal subunit protein uL3 (Tropheryma whipplei (strain TW08/27) (Whipple's bacillus)).